We begin with the raw amino-acid sequence, 301 residues long: Probable alpha-L-glutamate ligase 2 (301 aa).

The ATP-grasp domain occupies Leu-104 to Glu-287. ATP is bound by residues Lys-141, Glu-178 to Tyr-179, Asp-187, and Arg-211 to Asn-213. Positions 248, 260, and 262 each coordinate Mg(2+). Mn(2+) contacts are provided by Asp-248, Glu-260, and Asn-262.

Belongs to the RimK family. Requires Mg(2+) as cofactor. It depends on Mn(2+) as a cofactor.

The polypeptide is Probable alpha-L-glutamate ligase 2 (Shewanella baltica (strain OS195)).